The chain runs to 402 residues: O-glucosyltransferase rumi homolog (402 aa).

A signal peptide spans 1 to 20 (MPYLEIVLALLVLSFQLGHS). 4 cysteine pairs are disulfide-bonded: C67–C74, C72–C375, C118–C124, and C279–C302. N-linked (GlcNAc...) asparagine glycosylation is present at N71. The active-site Proton donor/acceptor is the D149. The interaction with the consensus sequence C-X-S-X-[PA]-C in peptide substrates stretch occupies residues 189–194 (AISLYP). UDP-alpha-D-glucose-binding positions include 226-230 (RGSRT), R234, 273-275 (VRL), and 291-295 (AASFR).

Belongs to the glycosyltransferase 90 family.

The protein resides in the endoplasmic reticulum lumen. It is found in the secreted. The protein operates within protein modification; protein glycosylation. In terms of biological role, protein O-glucosyltransferase. Catalyzes the reaction that attaches glucose through an O-glycosidic linkage to a conserved serine residue found in the consensus sequence C-X-S-X-[PA]-C in epidermal growth factor-like repeats. Regulates Notch signaling by glucosylating Notch in the ER, glucosylation is required for the correct folding and cleavage of Notch. In Aedes aegypti (Yellowfever mosquito), this protein is O-glucosyltransferase rumi homolog.